The sequence spans 262 residues: Hydroxyethylthiazole kinase (262 aa).

Met-50 serves as a coordination point for substrate. ATP contacts are provided by Arg-125 and Thr-171. Gly-198 provides a ligand contact to substrate.

It belongs to the Thz kinase family. Mg(2+) serves as cofactor.

It catalyses the reaction 5-(2-hydroxyethyl)-4-methylthiazole + ATP = 4-methyl-5-(2-phosphooxyethyl)-thiazole + ADP + H(+). It participates in cofactor biosynthesis; thiamine diphosphate biosynthesis; 4-methyl-5-(2-phosphoethyl)-thiazole from 5-(2-hydroxyethyl)-4-methylthiazole: step 1/1. Its function is as follows. Catalyzes the phosphorylation of the hydroxyl group of 4-methyl-5-beta-hydroxyethylthiazole (THZ). The polypeptide is Hydroxyethylthiazole kinase (Escherichia coli O6:H1 (strain CFT073 / ATCC 700928 / UPEC)).